Reading from the N-terminus, the 721-residue chain is DNA ligase (721 aa).

A compositionally biased stretch (low complexity) spans 1–19; the sequence is MTAKKQGAQASASAPSGDS. A disordered region spans residues 1–23; it reads MTAKKQGAQASASAPSGDSPAER. Residues 48 to 52, 97 to 98, and Glu162 contribute to the NAD(+) site; these read DADYD and SL. The active-site N6-AMP-lysine intermediate is Lys164. The NAD(+) site is built by Arg185, Glu221, Lys338, and Lys362. Residues Cys456, Cys459, Cys474, and Cys480 each coordinate Zn(2+). The BRCT domain occupies 639 to 721; that stretch reads RAPLPLAGKT…LKLLAEVGAA (83 aa).

This sequence belongs to the NAD-dependent DNA ligase family. LigA subfamily. It depends on Mg(2+) as a cofactor. The cofactor is Mn(2+).

It carries out the reaction NAD(+) + (deoxyribonucleotide)n-3'-hydroxyl + 5'-phospho-(deoxyribonucleotide)m = (deoxyribonucleotide)n+m + AMP + beta-nicotinamide D-nucleotide.. Its function is as follows. DNA ligase that catalyzes the formation of phosphodiester linkages between 5'-phosphoryl and 3'-hydroxyl groups in double-stranded DNA using NAD as a coenzyme and as the energy source for the reaction. It is essential for DNA replication and repair of damaged DNA. The protein is DNA ligase of Cupriavidus metallidurans (strain ATCC 43123 / DSM 2839 / NBRC 102507 / CH34) (Ralstonia metallidurans).